Here is a 152-residue protein sequence, read N- to C-terminus: Large ribosomal subunit protein bL9 (152 aa).

Belongs to the bacterial ribosomal protein bL9 family.

Binds to the 23S rRNA. In Synechococcus elongatus (strain ATCC 33912 / PCC 7942 / FACHB-805) (Anacystis nidulans R2), this protein is Large ribosomal subunit protein bL9.